The primary structure comprises 95 residues: Co-chaperonin GroES (95 aa).

Belongs to the GroES chaperonin family. As to quaternary structure, heptamer of 7 subunits arranged in a ring. Interacts with the chaperonin GroEL.

The protein resides in the cytoplasm. In terms of biological role, together with the chaperonin GroEL, plays an essential role in assisting protein folding. The GroEL-GroES system forms a nano-cage that allows encapsulation of the non-native substrate proteins and provides a physical environment optimized to promote and accelerate protein folding. GroES binds to the apical surface of the GroEL ring, thereby capping the opening of the GroEL channel. The protein is Co-chaperonin GroES of Streptococcus mutans serotype c (strain ATCC 700610 / UA159).